Reading from the N-terminus, the 378-residue chain is Protein SLG1 (378 aa).

The N-terminal stretch at 1–21 (MRPNKTSLLLALLSILSQANA) is a signal peptide. One can recognise a WSC domain in the interval 22–110 (YEYVNCFSSL…EDAYSVYQLD (89 aa)). Residues 22 to 264 (YEYVNCFSSL…THKKKANVGA (243 aa)) are Extracellular-facing. A glycan (N-linked (GlcNAc...) asparagine) is linked at Asn65. Disordered stretches follow at residues 115 to 201 (SNSI…TSST) and 236 to 256 (QNSG…SKTH). Positions 236 to 253 (QNSGSATGTAGSDSTSGS) are enriched in low complexity. The helical transmembrane segment at 265–285 (IVGGVVGGVVGAVAIALCILL) threads the bilayer. Residues 286–378 (IVRHINMKRE…LTVVNPDEAD (93 aa)) are Cytoplasmic-facing. Residues 318 to 378 (ASSFSSNHGP…LTVVNPDEAD (61 aa)) are disordered. Residues 319 to 331 (SSFSSNHGPSSGS) are compositionally biased toward low complexity. Residues Ser331 and Ser353 each carry the phosphoserine modification.

Glycosylated. Phosphorylated. Phosphorylation serves a negative regulatory role.

It is found in the cell membrane. Its function is as follows. Plays a role during G1 to regulate entering or exiting the cell cycle. Involved in stress responses. Has a role in cell wall integrity signaling. Activates ROM1 or ROM2 catalyzed guanine nucleotide exchange toward RHO1. Important regulator of the actin cytoskeleton rearrangements in conditions of cell wall expansion and membrane stretching. Specifically required for the actin reorganization induced by hypo-osmotic shock. Multicopy suppressor of 1,3-beta-glucan synthase (GS). Activates GS upstream of RHO1. Acts positively on the PKC1-MAPK pathway. Activates transiently SLT2 during alkaline stress, which leads to an increase in the expression of several specific genes. The chain is Protein SLG1 (SLG1) from Saccharomyces cerevisiae (strain ATCC 204508 / S288c) (Baker's yeast).